The chain runs to 140 residues: Nucleoside diphosphate kinase (140 aa).

Residues lysine 11, phenylalanine 59, arginine 87, threonine 93, arginine 104, and asparagine 114 each coordinate ATP. Residue histidine 117 is the Pros-phosphohistidine intermediate of the active site.

Belongs to the NDK family. As to quaternary structure, homotetramer. Mg(2+) is required as a cofactor.

The protein localises to the cytoplasm. The enzyme catalyses a 2'-deoxyribonucleoside 5'-diphosphate + ATP = a 2'-deoxyribonucleoside 5'-triphosphate + ADP. The catalysed reaction is a ribonucleoside 5'-diphosphate + ATP = a ribonucleoside 5'-triphosphate + ADP. Its function is as follows. Major role in the synthesis of nucleoside triphosphates other than ATP. The ATP gamma phosphate is transferred to the NDP beta phosphate via a ping-pong mechanism, using a phosphorylated active-site intermediate. This Francisella tularensis subsp. mediasiatica (strain FSC147) protein is Nucleoside diphosphate kinase.